A 196-amino-acid polypeptide reads, in one-letter code: Alpha-crystallin A chain (196 aa).

At methionine 1 the chain carries N-acetylmethionine. The required for complex formation with BFSP1 and BFSP2 stretch occupies residues 1-63 (MDVTIQHPWF…RTVLDSGISE (63 aa)). Deamidated glutamine; partial is present on glutamine 6. The residue at position 45 (serine 45) is a Phosphoserine. A Deamidated glutamine; partial modification is found at glutamine 50. The sHSP domain maps to 76–185 (HAGNPKNNPG…GHSERAIPVS (110 aa)). Residues lysine 93 and lysine 122 each carry the N6-acetyllysine modification. Position 123 (histidine 123) interacts with Zn(2+). Asparagine 124 is modified (deamidated asparagine; partial). Zn(2+) contacts are provided by glutamate 125 and histidine 130. Serine 145 is subject to Phosphoserine. Asparagine 146 carries the post-translational modification Deamidated asparagine; partial. Residues 168-196 (KVQSGLDAGHSERAIPVSREEKPSSAPSS) are disordered. At glutamine 170 the chain carries Deamidated glutamine; partial. A compositionally biased stretch (basic and acidic residues) spans 176–190 (GHSERAIPVSREEKP). Residue histidine 177 participates in Zn(2+) binding. Serine 185 is a glycosylation site (O-linked (GlcNAc) serine).

This sequence belongs to the small heat shock protein (HSP20) family. In terms of assembly, heteropolymer composed of three CRYAA and one CRYAB subunits. Inter-subunit bridging via zinc ions enhances stability, which is crucial as there is no protein turn over in the lens. Can also form homodimers and homotetramers (dimers of dimers) which serve as the building blocks of homooligomers. Within homooligomers, the zinc-binding motif is created from residues of 3 different molecules. His-123 and Glu-125 from one molecule are ligands of the zinc ion, and His-130 and His-177 residues from additional molecules complete the site with tetrahedral coordination geometry. Part of a complex required for lens intermediate filament formation composed of BFSP1, BFSP2 and CRYAA. Post-translationally, acetylation at Lys-93 may increase chaperone activity. In terms of processing, undergoes age-dependent proteolytical cleavage at the C-terminus. Cleavage by m-calpain produces specifically alpha-crystallin A(1-162), cleavage by Capn3/Lp82 produces specifically alpha-crystallin A(1-168) which is the major truncated form during normal maturation and induced cataract formation. In terms of tissue distribution, highly expressed in eye lens. Also expressed in non-lenticular tissues such as brain, spleen, liver, lung, skin, small intestine and a several epithelial and fibroblast cell lines with highest levels in spleen.

Its subcellular location is the cytoplasm. It localises to the nucleus. In terms of biological role, contributes to the transparency and refractive index of the lens. Acts as a chaperone, preventing aggregation of various proteins under a wide range of stress conditions. Required for the correct formation of lens intermediate filaments as part of a complex composed of BFSP1, BFSP2 and CRYAA. Functionally, inhibits bacterial growth in the lens. This is Alpha-crystallin A chain (Cryaa) from Rattus norvegicus (Rat).